We begin with the raw amino-acid sequence, 130 residues long: Small ribosomal subunit protein uS8 (130 aa).

This sequence belongs to the universal ribosomal protein uS8 family. In terms of assembly, part of the 30S ribosomal subunit. Contacts proteins S5 and S12.

One of the primary rRNA binding proteins, it binds directly to 16S rRNA central domain where it helps coordinate assembly of the platform of the 30S subunit. The polypeptide is Small ribosomal subunit protein uS8 (Pectobacterium atrosepticum (strain SCRI 1043 / ATCC BAA-672) (Erwinia carotovora subsp. atroseptica)).